The primary structure comprises 279 residues: Energy-coupling factor transporter ATP-binding protein EcfA2 (279 aa).

The ABC transporter domain occupies 3–245; the sequence is IALENVNFIY…VVFMEEVQLG (243 aa). 40–47 is a binding site for ATP; the sequence is GHTGSGKS.

It belongs to the ABC transporter superfamily. Energy-coupling factor EcfA family. In terms of assembly, forms a stable energy-coupling factor (ECF) transporter complex composed of 2 membrane-embedded substrate-binding proteins (S component), 2 ATP-binding proteins (A component) and 2 transmembrane proteins (T component).

The protein resides in the cell membrane. Its function is as follows. ATP-binding (A) component of a common energy-coupling factor (ECF) ABC-transporter complex. Unlike classic ABC transporters this ECF transporter provides the energy necessary to transport a number of different substrates. The chain is Energy-coupling factor transporter ATP-binding protein EcfA2 from Streptococcus pneumoniae serotype 2 (strain D39 / NCTC 7466).